Consider the following 503-residue polypeptide: Maturase K (503 aa).

The protein belongs to the intron maturase 2 family. MatK subfamily.

It is found in the plastid. It localises to the chloroplast. Functionally, usually encoded in the trnK tRNA gene intron. Probably assists in splicing its own and other chloroplast group II introns. The polypeptide is Maturase K (Agonis flexuosa (Australian willow myrtle)).